The primary structure comprises 217 residues: Adenylate kinase (217 aa).

10-15 (GAGKGT) provides a ligand contact to ATP. Residues 30-59 (STGDILRAAVSEMTPMGVKAKGYMESGALV) are NMP. Residues Thr31, Arg36, 57–59 (ALV), 85–88 (GFPR), and Gln92 each bind AMP. Residues 126–163 (GRRTCRLCGKGYHVVFDPPRVSGRCDECLGELFQRDDD) form an LID region. An ATP-binding site is contributed by Arg127. Residues Cys130, Cys133, Cys150, and Cys153 each contribute to the Zn(2+) site. Residues Arg160 and Arg171 each coordinate AMP. Gly199 serves as a coordination point for ATP.

This sequence belongs to the adenylate kinase family. In terms of assembly, monomer.

The protein resides in the cytoplasm. It carries out the reaction AMP + ATP = 2 ADP. The protein operates within purine metabolism; AMP biosynthesis via salvage pathway; AMP from ADP: step 1/1. Catalyzes the reversible transfer of the terminal phosphate group between ATP and AMP. Plays an important role in cellular energy homeostasis and in adenine nucleotide metabolism. The sequence is that of Adenylate kinase from Geotalea uraniireducens (strain Rf4) (Geobacter uraniireducens).